The following is a 207-amino-acid chain: 3-demethoxyubiquinol 3-hydroxylase (207 aa).

Fe cation is bound by residues Glu56, Glu86, His89, Glu138, Glu170, and His173.

Belongs to the COQ7 family. It depends on Fe cation as a cofactor.

The protein localises to the cell membrane. It carries out the reaction a 5-methoxy-2-methyl-3-(all-trans-polyprenyl)benzene-1,4-diol + AH2 + O2 = a 3-demethylubiquinol + A + H2O. Its pathway is cofactor biosynthesis; ubiquinone biosynthesis. In terms of biological role, catalyzes the hydroxylation of 2-nonaprenyl-3-methyl-6-methoxy-1,4-benzoquinol during ubiquinone biosynthesis. The sequence is that of 3-demethoxyubiquinol 3-hydroxylase from Dechloromonas aromatica (strain RCB).